Here is an 830-residue protein sequence, read N- to C-terminus: MYRSGLLTSGGGSAALTALRAIGSRSSLSNGKFIWNVGKRFITSEIQEKDQQAGESNTATDTGIIHKTEQETLVYFDNVYPRDTSLWNPAQWYNLLLVNQSREAVRDKITEFASPPSNPIHGLELRSTIPVKRDGGVFATFLVPSKYTKAEVNAIIQKNTAEESSKSIFSFFTRASAFPVKGFPWIEDLRRLPTNTIKVLFQGPPLTEEEIYSLFRRYGTIIDIVPASDSVKNASVRYKSLKGAICAKNCVSGIEIHNTVLHIQYQQEARNFVISNFFVNHTRIAIPVMLAVLSIIAVLIFDPIREFSIEQKITHIYSLSWDNYWIRQIRNFTNSTVTSFRNYWGVNENAFAEKHLWEERIEKVNDLKMWLQENNNTFVVVRGPRGSGKNELIMQHTVGDRTNVLYLDCDKLIKSRTDAKFLRNAASQLGYFPIFPWINSVTSVIDLMVQGLTGQKSGLSETKEAQFRTMLTTALTSIRRIALKGYKSVIVDGGEDVNVKEEDYLQQHPEAKPIIVIDRYEGKSEINGFIYKELADWASMLVQMNVAHVIFLTETVSSNQQLSESLPNQVFKTLVLSDASKENSRKYVLSQLQSFVDSKQKSKEDIKITENIEAEKSKITDQIDDALEPLGGRMLDLQAFVRRVKSGEQPTEALDKMIEQASEQITQIFLSDKVDGIKSAQAWELIELLSAKSVVSYDDIVFKPLFKAAPELGIVELENSGLITVSRNRGVLDKIRPAKPLYKAAFYYLVNSQELSTILRTRYLLKVITFETGRIKKWEDELRPLGKSGDPKLFRGRFEYLSGKIETSNKVIVASEAEIKALSERKQNQK.

A mitochondrion-targeting transit peptide spans 1-41 (MYRSGLLTSGGGSAALTALRAIGSRSSLSNGKFIWNVGKRF). Topologically, residues 42–283 (ITSEIQEKDQ…ISNFFVNHTR (242 aa)) are mitochondrial matrix. The 72-residue stretch at 197-268 (IKVLFQGPPL…TVLHIQYQQE (72 aa)) folds into the RRM domain. The helical transmembrane segment at 284 to 304 (IAIPVMLAVLSIIAVLIFDPI) threads the bilayer. The Mitochondrial intermembrane segment spans residues 305 to 830 (REFSIEQKIT…ALSERKQNQK (526 aa)).

Belongs to the YME2 family.

Its subcellular location is the mitochondrion inner membrane. In terms of biological role, plays a role in maintaining the mitochondrial genome and in controlling the mtDNA escape. Involved in the regulation of mtDNA nucleotide structure and number. May have a dispensable role in early maturation of pre-rRNA. This Vanderwaltozyma polyspora (strain ATCC 22028 / DSM 70294 / BCRC 21397 / CBS 2163 / NBRC 10782 / NRRL Y-8283 / UCD 57-17) (Kluyveromyces polysporus) protein is Mitochondrial escape protein 2 (YME2).